Consider the following 478-residue polypeptide: Dihydrolipoyl dehydrogenase (478 aa).

FAD-binding positions include Glu-34–Cys-49, Lys-58, and Gly-122. The cysteines at positions 49 and 54 are disulfide-linked. NAD(+) is bound by residues Gly-188–Ile-192, Glu-211, Val-245, and Ala-276–Arg-279. FAD is bound by residues Asp-319 and Ala-327. His-451 serves as the catalytic Proton acceptor.

Belongs to the class-I pyridine nucleotide-disulfide oxidoreductase family. As to quaternary structure, homodimer. It depends on FAD as a cofactor.

It is found in the cytoplasm. The catalysed reaction is N(6)-[(R)-dihydrolipoyl]-L-lysyl-[protein] + NAD(+) = N(6)-[(R)-lipoyl]-L-lysyl-[protein] + NADH + H(+). The branched-chain alpha-keto dehydrogenase complex catalyzes the overall conversion of alpha-keto acids to acyl-CoA and CO(2). It contains multiple copies of 3 enzymatic components: branched-chain alpha-keto acid decarboxylase (E1), lipoamide acyltransferase (E2) and lipoamide dehydrogenase (E3). This chain is Dihydrolipoyl dehydrogenase (lpd), found in Pseudomonas fluorescens.